The sequence spans 956 residues: Calsyntenin-3 (956 aa).

The first 19 residues, 1–19 (MTLLLLPLLLASLLASCSC), serve as a signal peptide directing secretion. Residues 1 to 30 (MTLLLLPLLLASLLASCSCNKANKHKPWIE) are Cytoplasmic-facing. Residues 20–847 (NKANKHKPWI…SHRNSMIPSA (828 aa)) are Extracellular-facing. 2 consecutive Cadherin domains span residues 29-145 (IEAE…APVF) and 146-246 (VERL…KPSW). An intramembrane region (helical) is located at residues 31–51 (AEYQGIVMENDNTVLLNPPLF). At 52-71 (ALDKDAPLRYAGEICGFRLH) the chain is on the cytoplasmic side. An intramembrane region (helical) is located at residues 72-94 (GSGVPFEAVILDKATGEGLIRAK). Topologically, residues 95 to 151 (EPVDCEAQKEHTFTIQAYDCGEGPDGANTKKSHKATVHVRVNDVNEFAPVFVERLYR) are cytoplasmic. The segment at residues 152 to 172 (AAVTEGKLYDRILRVEAIDGD) is an intramembrane region (helical). Topologically, residues 173 to 255 (CSPQYSQICY…WQGWNKRIEY (83 aa)) are cytoplasmic. A helical membrane pass occupies residues 256–276 (APGAGSLALFPGIRLETCDEP). The Lumenal portion of the chain corresponds to 277 to 364 (LWNIQATIEL…PLGGPSGLGS (88 aa)). N-linked (GlcNAc...) asparagine glycans are attached at residues Asn299, Asn327, Asn347, Asn507, and Asn740. The helical transmembrane segment at 848-868 (ATLIIVVCVGFLVLMVVLGLV) threads the bilayer. Residues 869–956 (RIHSLHRRVS…RIIETPPHRY (88 aa)) are Cytoplasmic-facing. Residues 916 to 956 (QSCVTGAVGGQQEDEDSSDSEVADSPSSDERRIIETPPHRY) are disordered. Over residues 927–937 (QEDEDSSDSEV) the composition is skewed to acidic residues. A compositionally biased stretch (basic and acidic residues) spans 943–956 (SDERRIIETPPHRY).

The protein belongs to the calsyntenin family. As to quaternary structure, interacts (via cadherin domains) with both alpha and beta isoforms of neurexins (NRXN1, NRXN2 and NRXN3). Directly interacts with APBA2. Forms a tripartite complex with APBA2 and APP. Interacts with low affinity with KLC1. Interacts with SLC23A2/SVCT2. In terms of assembly, interacts with CIDEA; inhibiting the lipid transferase activity of CIDEA. Interacts with CIDEC; inhibiting the lipid transferase activity of CIDEC. Proteolytically processed under normal cellular conditions. A primary zeta-cleavage generates a large extracellular (soluble) N-terminal domain (sAlc) and a short C-terminal transmembrane fragment (CTF1). A secondary cleavage catalyzed by gamma-secretase within the transmembrane domain releases the beta-Alc-beta chain in the extracellular milieu and produces an intracellular fragment (AlcICD). This processing is strongly suppressed in the tripartite complex formed with APBA2 and APP, which seems to prevent the association with gamma-secretase. In terms of processing, ubiquitinated: endoplasmic reticulum-localized protein is ubiquitinated and degraded by the endoplasmic reticulum-associated degradation (ERAD) pathway. As to expression, according to PubMed:12498782, expressed predominantly in the brain and in kidney. Low levels in heart, skeletal muscle, liver, placenta, pancreas and lung. According to PubMed:12972431, predominant expression in brain, and only marginal in kidney. In brain, present throughout all cortical layers, highest levels in GABAergic neurons (based on morphology and distribution pattern). Expression is restricted to adipose tissue, with high expression in multilocular thermogenic adipocytes (brown adipose tissue).

The protein resides in the postsynaptic cell membrane. It is found in the endoplasmic reticulum membrane. Its subcellular location is the golgi apparatus membrane. The protein localises to the cell projection. It localises to the dendrite. The protein resides in the lipid droplet. In terms of biological role, postsynaptic adhesion molecule that binds to presynaptic neurexins to mediate both excitatory and inhibitory synapse formation. Promotes synapse development by acting as a cell adhesion molecule at the postsynaptic membrane, which associates with both neurexin-alpha and neurexin-beta proteins at the presynaptic membrane. Regulates the balance between excitatory and inhibitory synapses by inhibiting formation of excitatory parallel-fiber synapses and promoting formation of inhibitory synapses in the same neuron. May also be involved in ascorbate (vitamin C) uptake via its interaction with SLC23A2/SVCT2. Complex formation with APBA2 and APP, stabilizes APP metabolism and enhances APBA2-mediated suppression of beta-APP40 secretion, due to the retardation of intracellular APP maturation. Adipose-specific isoform that plays a key role in adaptive thermogenesis. Facilitates the efficient use of stored triglyceride by promoting multilocular morphology of thermogenic adipocytes: acts by inhibiting the activity of CIDEA and CIDEC on lipid droplets, thereby preventing lipid droplet fusion and facilitating lipid utilization. May also participate in adaptive thermogenesis by promoting sympathetic innervation of thermogenic adipose tissue: acts by driving secretion of neurotrophic factor S100B from brown adipocytes, stimulating neurite outgrowth from sympathetic neurons. This chain is Calsyntenin-3, found in Homo sapiens (Human).